The chain runs to 123 residues: U11/U12 small nuclear ribonucleoprotein 25 kDa protein (123 aa).

One can recognise a Ubiquitin-like domain in the interval 32–123; it reads MTVRVCKMDG…VSFIKKLRQK (92 aa).

Component of the U11/U12 snRNPs that are part of the U12-type spliceosome.

It localises to the nucleus. This is U11/U12 small nuclear ribonucleoprotein 25 kDa protein (Snrnp25) from Mus musculus (Mouse).